A 314-amino-acid polypeptide reads, in one-letter code: Olfactory receptor 5P62 (314 aa).

Residues 1–28 (MAFIYNGSQTTVTEFILLGLTDDPVLKV) are Extracellular-facing. A glycan (N-linked (GlcNAc...) asparagine) is linked at N6. A helical membrane pass occupies residues 29 to 49 (ILFCIILCIYLVTVFGNLSTI). The Cytoplasmic segment spans residues 50–57 (LLIGVSSK). Residues 58-78 (LHHPMYFFLSHLASVDMGLSS) traverse the membrane as a helical segment. Residues 79 to 102 (SVTPNMLVNFLTEKNTISYLGCGI) lie on the Extracellular side of the membrane. Cysteines 100 and 192 form a disulfide. Residues 103–123 (QLSSAAFFGAVEFFLLAAMAY) traverse the membrane as a helical segment. At 124–136 (DRLVAICNPLLYS) the chain is on the cytoplasmic side. A helical transmembrane segment spans residues 137-157 (TKMSSQVCIQLVAGSYVGGFL). Residues 158-199 (NASFVTHFFFSFLFCGPNRVNHFFCDLSPMMELSCSDVSISE) lie on the Extracellular side of the membrane. Residues 200–220 (IVISFSAGSFTMTTLFVIVIP) form a helical membrane-spanning segment. Over 221-240 (YFYIFITILKIRSTEGRQKA) the chain is Cytoplasmic. A helical transmembrane segment spans residues 241-261 (FSTCTSHLTAVTLYYGTIIFI). Over 262 to 274 (YVMPKSTYSRDQN) the chain is Extracellular. Residues 275 to 295 (KVVSLFYMLVIPVLNPLIYSL) traverse the membrane as a helical segment. The Cytoplasmic portion of the chain corresponds to 296 to 314 (RNNEIKDALKRQFYRKTLL).

Belongs to the G-protein coupled receptor 1 family.

The protein localises to the cell membrane. In terms of biological role, potential odorant receptor. The chain is Olfactory receptor 5P62 from Mus musculus (Mouse).